The primary structure comprises 498 residues: Angiopoietin-4 (498 aa).

Residues 1-22 form the signal peptide; it reads MPSPPAMLLGGLLLIVASTTVA. Residues 51 to 80 are disordered; it reads EPEPCPPEPEAFGGSNSLQRDSPAATLNLG. A coiled-coil region spans residues 85–109; that stretch reads QRMRQLEKMLENNTQWLQKLERYIQ. N-linked (GlcNAc...) asparagine glycosylation is found at asparagine 96, asparagine 126, asparagine 158, asparagine 247, asparagine 295, asparagine 306, asparagine 332, and asparagine 424. The stretch at 186–254 forms a coiled coil; sequence HELHRLQGHN…SSNSSLLQRQ (69 aa). In terms of domain architecture, Fibrinogen C-terminal spans 277–497; it reads RAADQLFQDC…TTRMMVRPSG (221 aa). A disulfide bond links cysteine 286 and cysteine 315. Cysteine 439 and cysteine 452 are disulfide-bonded.

As to quaternary structure, homodimer; disulfide-linked. Interacts with TEK/TIE2.

Its subcellular location is the secreted. In terms of biological role, binds to TEK/TIE2, modulating ANGPT1 signaling. Can induce tyrosine phosphorylation of TEK/TIE2. Promotes endothelial cell survival, migration and angiogenesis. The polypeptide is Angiopoietin-4 (ANGPT4) (Bos taurus (Bovine)).